A 363-amino-acid chain; its full sequence is G-protein coupled receptor 6 (363 aa).

At 1–75 (MNASAAALNE…SGLLLSAVNP (75 aa)) the chain is on the extracellular side. 2 N-linked (GlcNAc...) asparagine glycosylation sites follow: N2 and N9. Residues 28–51 (AGTPDTSEWGPPAASAALGGGGGP) are disordered. N-linked (GlcNAc...) asparagine glycosylation occurs at N52. Residues 76-95 (WDVLLCVSGTVIAGENALVV) form a helical membrane-spanning segment. The Cytoplasmic segment spans residues 96–107 (ALIASTPALRTP). Residues 108–131 (MFVLVGSLATADLLAGCGLILHFV) traverse the membrane as a helical segment. Over 132–143 (FQYVVPSETVSL) the chain is Extracellular. A helical membrane pass occupies residues 144–165 (LMVGFLVASFAASVSSLLAITV). Over 166 to 186 (DRYLSLYNALTYYSRRTLLGV) the chain is Cytoplasmic. A helical transmembrane segment spans residues 187-206 (HLLLAATWTVSLGLGLLPVL). At 207 to 231 (GWNCLADRASCSVVRPLTRSHVALL) the chain is on the extracellular side. The chain crosses the membrane as a helical span at residues 232-250 (STSFFVVFGIMLHLYVRIC). Residues 251–278 (QVVWRHAHQIALQQHCLAPPHLAATRKG) lie on the Cytoplasmic side of the membrane. Residues 279–305 (VGTLAVVLGTFGASWLPFAIYCVVGSQ) traverse the membrane as a helical segment. The Extracellular segment spans residues 306–310 (EDPAI). A helical membrane pass occupies residues 311–332 (YTYATLLPATYNSMINPIIYAF). Over 333-363 (RNQEIQRALWLLFCGCFQSKVPFRSRSPSEV) the chain is Cytoplasmic. Residue C346 is the site of S-palmitoyl cysteine attachment. S357, S359, and S361 each carry phosphoserine.

The protein belongs to the G-protein coupled receptor 1 family. In terms of tissue distribution, expressed in the brain, with a prominent distribution in striatum.

It is found in the cell membrane. Orphan receptor with constitutive G(s) signaling activity that activate cyclic AMP. Promotes neurite outgrowth and blocks myelin inhibition in neurons. This is G-protein coupled receptor 6 (Gpr6) from Rattus norvegicus (Rat).